Here is a 313-residue protein sequence, read N- to C-terminus: MTFDENISRILVKDKEYEMPFSKGLLARSLTAAGMKPSESYTLAREIERDLNEQNVLKISKDELRRRVYYTLINRDYEGIGEKYLLWRRVLKKHSIIILVGGSSGVGTSTIAFELASRLGIPSVIGTDSIREVMRRSISKDLVPMLYESSYTAWTALRRSQWDEQDTKEMHLLGFERHVEPVLLGIESIIDRSLTEGTSVIIEGTHIVPGLMGEKYQSMPNVIFLNLTLSSEETHKKRFTARAKVSDRPLERYLENFEIIKEINQYIVEKSKENKVPVIENVSISETVQKCLEIVTERFSNLNDEPIIDSDMY.

The ATP-cone domain maps to S8 to S95.

The protein belongs to the 2-phosphoglycerate kinase family. It depends on a divalent metal cation as a cofactor.

The enzyme catalyses (2R)-2-phosphoglycerate + ATP = (2R)-2,3-bisphosphoglycerate + ADP + H(+). Its pathway is thermoadapter biosynthesis; cyclic 2,3-diphosphoglycerate biosynthesis; cyclic 2,3-diphosphoglycerate from 2-phospho-D-glycerate: step 1/2. Functionally, catalyzes the phosphorylation of 2-phosphoglycerate to 2,3-diphosphoglycerate. Involved in the biosynthesis of cyclic 2,3-bisphosphoglycerate, a thermoprotectant. This Methanococcus maripaludis (strain C5 / ATCC BAA-1333) protein is 2-phosphoglycerate kinase.